The primary structure comprises 184 residues: NADH-quinone oxidoreductase subunit B (184 aa).

The [4Fe-4S] cluster site is built by Cys37, Cys38, Cys103, and Cys132.

The protein belongs to the complex I 20 kDa subunit family. As to quaternary structure, NDH-1 is composed of 14 different subunits. Subunits NuoB, C, D, E, F, and G constitute the peripheral sector of the complex. [4Fe-4S] cluster is required as a cofactor.

Its subcellular location is the cell membrane. The enzyme catalyses a quinone + NADH + 5 H(+)(in) = a quinol + NAD(+) + 4 H(+)(out). NDH-1 shuttles electrons from NADH, via FMN and iron-sulfur (Fe-S) centers, to quinones in the respiratory chain. The immediate electron acceptor for the enzyme in this species is believed to be a menaquinone. Couples the redox reaction to proton translocation (for every two electrons transferred, four hydrogen ions are translocated across the cytoplasmic membrane), and thus conserves the redox energy in a proton gradient. The polypeptide is NADH-quinone oxidoreductase subunit B (Rhodococcus jostii (strain RHA1)).